Consider the following 241-residue polypeptide: Proteasome subunit alpha type-5 (241 aa).

An N-acetylmethionine modification is found at M1. A Phosphoserine modification is found at S16. The residue at position 55 (T55) is a Phosphothreonine. Phosphoserine is present on residues S56 and S63. O-linked (GlcNAc) serine glycosylation is present at S198.

Belongs to the peptidase T1A family. As to quaternary structure, the 26S proteasome consists of a 20S proteasome core and two 19S regulatory subunits. The 20S proteasome core is a barrel-shaped complex made of 28 subunits that are arranged in four stacked rings. The two outer rings are each formed by seven alpha subunits, and the two inner rings are formed by seven beta subunits. The proteolytic activity is exerted by three beta-subunits PSMB5, PSMB6 and PSMB7. PSMA5 interacts directly with the PSMG1-PSMG2 heterodimer which promotes 20S proteasome assembly.

The protein resides in the cytoplasm. The protein localises to the nucleus. Component of the 20S core proteasome complex involved in the proteolytic degradation of most intracellular proteins. This complex plays numerous essential roles within the cell by associating with different regulatory particles. Associated with two 19S regulatory particles, forms the 26S proteasome and thus participates in the ATP-dependent degradation of ubiquitinated proteins. The 26S proteasome plays a key role in the maintenance of protein homeostasis by removing misfolded or damaged proteins that could impair cellular functions, and by removing proteins whose functions are no longer required. Associated with the PA200 or PA28, the 20S proteasome mediates ubiquitin-independent protein degradation. This type of proteolysis is required in several pathways including spermatogenesis (20S-PA200 complex) or generation of a subset of MHC class I-presented antigenic peptides (20S-PA28 complex). This chain is Proteasome subunit alpha type-5 (PSMA5), found in Bos taurus (Bovine).